An 89-amino-acid polypeptide reads, in one-letter code: Cell division topological specificity factor (89 aa).

The protein belongs to the MinE family.

Its function is as follows. Prevents the cell division inhibition by proteins MinC and MinD at internal division sites while permitting inhibition at polar sites. This ensures cell division at the proper site by restricting the formation of a division septum at the midpoint of the long axis of the cell. The polypeptide is Cell division topological specificity factor (Paracoccus denitrificans (strain Pd 1222)).